Here is an 811-residue protein sequence, read N- to C-terminus: Myb-like DNA-binding protein BAS1 (811 aa).

Positions 34–110 (HRKNGRNSWS…DVRKRWTGSL (77 aa)) constitute a Myb-like domain. HTH myb-type domains are found at residues 111–165 (DPNL…GPGS) and 166–218 (KGRL…TMVV). 2 DNA-binding regions (H-T-H motif) span residues 138–161 (WLSI…IEVL) and 191–214 (WRKI…RKII). Residues 237 to 264 (DMTDGKLRQHPIADSDIRSDSTPNKEEQ) are compositionally biased toward basic and acidic residues. Disordered stretches follow at residues 237 to 320 (DMTD…SAPP), 348 to 379 (SQMN…DEHM), 535 to 713 (ATSH…LRDE), and 782 to 811 (LHNE…LNPS). Over residues 265-275 (LQLSQQNNPSL) the composition is skewed to low complexity. A compositionally biased stretch (basic and acidic residues) spans 282 to 298 (NVKENESSKLPRLKDND). 3 stretches are compositionally biased toward polar residues: residues 348-366 (SQMN…QTSL), 535-613 (ATSH…TSGS), and 653-664 (LNPSPNSVRSNG). A compositionally biased stretch (basic and acidic residues) spans 782 to 794 (LHNEAKKTSEHDM).

In terms of assembly, monomer.

The protein localises to the nucleus. Its function is as follows. Activates HIS4 transcription only in combination with PHO2/BAS2. BAS1 is also involved in the regulation of the purine biosynthesis pathway. This Saccharomyces cerevisiae (strain ATCC 204508 / S288c) (Baker's yeast) protein is Myb-like DNA-binding protein BAS1 (BAS1).